A 480-amino-acid chain; its full sequence is Transmembrane protein 161A (480 aa).

Residues 1-28 (MAVLGVQLVVTLFTATLMHRLAPHCSFA) form the signal peptide. Over 29–98 (RWLLCNGSLF…LTAVDALVLR (70 aa)) the chain is Extracellular. An N-linked (GlcNAc...) asparagine glycan is attached at Asn-34. A helical membrane pass occupies residues 99–119 (FFLEYQWFVDFAVYSVGVYLF). Residues 120–134 (TEAYYFVLGPVQETN) are Cytoplasmic-facing. Residues 135–155 (IAVFWCLLTLAFSLKVFLMVT) form a helical membrane-spanning segment. The Extracellular portion of the chain corresponds to 156–166 (RLYFSTKEGGE). Residues 167–187 (RSVCLSFAFLFLLLAMLVQVV) form a helical membrane-spanning segment. The Cytoplasmic portion of the chain corresponds to 188–224 (REETLELGLEPGLASMTQHLEPILKKQDWDWTLPVIK). Residues 225–245 (LAIRLGLAVLGSLLGAFLIFP) form a helical membrane-spanning segment. Topologically, residues 246-263 (GLRLAQTHQDALTLSADR) are extracellular. Residues 264 to 284 (PLLQLLLHTSFLSPLCTLWLW) form a helical membrane-spanning segment. Residues 285–304 (TKPVARDFLYQAPTRNMTFS) are Cytoplasmic-facing. The helical transmembrane segment at 305 to 325 (VPSEGAFDSLRLWVLVALCLL) threads the bilayer. At 326-370 (RLAVTRPHLQAYLCLAKARVEQLRKEAGRIEAREIQQRVVRVYCY) the chain is on the extracellular side. The chain crosses the membrane as a helical span at residues 371 to 391 (VTVVSLQYLTPLILTLHCTLL). Residues 392-450 (LKTLGGYSWALSSTPPPLAPSQPSEALIPVDPAGDEAQQTAAQVAGILGGLLTPLFLRG) are Cytoplasmic-facing. Residues 451 to 473 (MLAYIIWWTAACQLLSSLFGLYF) form a helical membrane-spanning segment. Residues 474–480 (HQHLAAS) lie on the Extracellular side of the membrane.

Belongs to the TMEM161 family.

The protein resides in the membrane. In terms of biological role, may play a role in protection against oxidative stress. Overexpression leads to reduced levels of oxidant-induced DNA damage and apoptosis. The polypeptide is Transmembrane protein 161A (Tmem161a) (Mus musculus (Mouse)).